Consider the following 303-residue polypeptide: uncharacterized protein (303 aa).

The signal sequence occupies residues 1–24 (MNRIALVFLYSLFLFNLAIGRVES). An N-linked (GlcNAc...) asparagine glycan is attached at N116. The segment at 124–179 (FTRQQQKKSHDDDDDDDDSDSDESKEEEEKKKRDRKHRRDKRQAITQGSQNNTDPN) is disordered. The span at 135–149 (DDDDDDDSDSDESKE) shows a compositional bias: acidic residues. The segment covering 155–164 (KRDRKHRRDK) has biased composition (basic residues). The segment covering 167-178 (AITQGSQNNTDP) has biased composition (polar residues).

This is an uncharacterized protein from Caenorhabditis elegans.